Reading from the N-terminus, the 357-residue chain is RNA 3'-terminal phosphate cyclase (357 aa).

Residues Q102 and 293 to 296 (HMGD) each bind ATP. Catalysis depends on H319, which acts as the Tele-AMP-histidine intermediate.

The protein belongs to the RNA 3'-terminal cyclase family. Type 1 subfamily.

It is found in the cytoplasm. The catalysed reaction is a 3'-end 3'-phospho-ribonucleotide-RNA + ATP = a 3'-end 2',3'-cyclophospho-ribonucleotide-RNA + AMP + diphosphate. Catalyzes the conversion of 3'-phosphate to a 2',3'-cyclic phosphodiester at the end of RNA. The mechanism of action of the enzyme occurs in 3 steps: (A) adenylation of the enzyme by ATP; (B) transfer of adenylate to an RNA-N3'P to produce RNA-N3'PP5'A; (C) and attack of the adjacent 2'-hydroxyl on the 3'-phosphorus in the diester linkage to produce the cyclic end product. The biological role of this enzyme is unknown but it is likely to function in some aspects of cellular RNA processing. This chain is RNA 3'-terminal phosphate cyclase, found in Desulfurococcus amylolyticus (strain DSM 18924 / JCM 16383 / VKM B-2413 / 1221n) (Desulfurococcus kamchatkensis).